An 85-amino-acid polypeptide reads, in one-letter code: ATP synthase subunit 9, mitochondrial (85 aa).

The next 2 membrane-spanning stretches (helical) occupy residues 19 to 39 and 61 to 81; these read IGAG…GNVF and ILGF…AFLI.

This sequence belongs to the ATPase C chain family. In terms of assembly, F-type ATPases have 2 components, CF(1) - the catalytic core - and CF(0) - the membrane proton channel. CF(1) has five subunits: alpha(3), beta(3), gamma(1), delta(1), epsilon(1). CF(0) has three main subunits: a, b and c.

Its subcellular location is the mitochondrion membrane. Functionally, this protein is one of the chains of the nonenzymatic membrane component (F0) of mitochondrial ATPase. This chain is ATP synthase subunit 9, mitochondrial (ATP9), found in Arabidopsis thaliana (Mouse-ear cress).